The chain runs to 390 residues: Transforming growth factor beta-1 proprotein (390 aa).

An N-terminal signal peptide occupies residues 1 to 29 (MPPSGLRLLPLLLPLLRLLVLTPGRPAAG). The tract at residues 30 to 74 (LSTCKTIDMELVKRKRIEAIRGQILSKLRLSSPPSQGEVPPVPLP) is straightjacket domain. Residues 75–271 (EAVLALYNST…ATPLERAQHL (197 aa)) form an arm domain region. Asparagine 82, asparagine 136, and asparagine 176 each carry an N-linked (GlcNAc...) asparagine glycan. Residues 226–252 (DSKDNTLQVDINGFSSSRRGDLATIHG) form a bowtie tail region. The short motif at 244–246 (RGD) is the Cell attachment site element. Intrachain disulfides connect cysteine 285–cysteine 294, cysteine 293–cysteine 356, cysteine 322–cysteine 387, and cysteine 326–cysteine 389.

This sequence belongs to the TGF-beta family. In terms of assembly, homodimer; disulfide-linked. Interacts with the serine proteases, HTRA1 and HTRA3: the interaction with either inhibits TGFB1-mediated signaling and the HTRA protease activity is required for this inhibition. May interact with THSD4; this interaction may lead to sequestration by FBN1 microfibril assembly and attenuation of TGFB signaling. Interacts with CD109, DPT and ASPN. Interacts with EFEMP2. Interacts with TSKU; the interaction contributes to regulation of the hair cycle. Interacts with TGFBR3. As to quaternary structure, homodimer; disulfide-linked. Interacts with transforming growth factor beta-1 (TGF-beta-1) chain; interaction is non-covalent and maintains TGF-beta-1 in a latent state; each latency-associated peptide (LAP) monomer interacts with TGF-beta-1 in the other monomer. Interacts with LTBP1; leading to regulation of TGF-beta-1 activation. Interacts with LRRC32/GARP; leading to regulation of TGF-beta-1 activation on the surface of activated regulatory T-cells (Tregs). Interacts with LRRC33/NRROS; leading to regulation of TGF-beta-1 activation in macrophages and microglia. Interacts (via cell attachment site) with integrins ITGAV and ITGB6 (ITGAV:ITGB6), leading to release of the active TGF-beta-1. Interacts with NREP; the interaction results in a decrease in TGFB1 autoinduction. Interacts with HSP90AB1; inhibits latent TGFB1 activation. Homodimer; disulfide-linked. Interacts with TGF-beta receptors (TGFBR1 and TGFBR2), leading to signal transduction. In terms of processing, transforming growth factor beta-1 proprotein: The precursor proprotein is cleaved in the Golgi apparatus by FURIN to form Transforming growth factor beta-1 (TGF-beta-1) and Latency-associated peptide (LAP) chains, which remain non-covalently linked, rendering TGF-beta-1 inactive. Post-translationally, N-glycosylated. Deglycosylation leads to activation of Transforming growth factor beta-1 (TGF-beta-1); mechanisms triggering deglycosylation-driven activation of TGF-beta-1 are however unclear.

The protein resides in the secreted. It is found in the extracellular space. Its subcellular location is the extracellular matrix. Functionally, transforming growth factor beta-1 proprotein: Precursor of the Latency-associated peptide (LAP) and Transforming growth factor beta-1 (TGF-beta-1) chains, which constitute the regulatory and active subunit of TGF-beta-1, respectively. Its function is as follows. Required to maintain the Transforming growth factor beta-1 (TGF-beta-1) chain in a latent state during storage in extracellular matrix. Associates non-covalently with TGF-beta-1 and regulates its activation via interaction with 'milieu molecules', such as LTBP1, LRRC32/GARP and LRRC33/NRROS, that control activation of TGF-beta-1. Interaction with LRRC33/NRROS regulates activation of TGF-beta-1 in macrophages and microglia. Interaction with LRRC32/GARP controls activation of TGF-beta-1 on the surface of activated regulatory T-cells (Tregs). Interaction with integrins (ITGAV:ITGB6 or ITGAV:ITGB8) results in distortion of the Latency-associated peptide chain and subsequent release of the active TGF-beta-1. Multifunctional protein that regulates the growth and differentiation of various cell types and is involved in various processes, such as normal development, immune function, microglia function and responses to neurodegeneration. Activation into mature form follows different steps: following cleavage of the proprotein in the Golgi apparatus, Latency-associated peptide (LAP) and Transforming growth factor beta-1 (TGF-beta-1) chains remain non-covalently linked rendering TGF-beta-1 inactive during storage in extracellular matrix. At the same time, LAP chain interacts with 'milieu molecules', such as LTBP1, LRRC32/GARP and LRRC33/NRROS that control activation of TGF-beta-1 and maintain it in a latent state during storage in extracellular milieus. TGF-beta-1 is released from LAP by integrins (ITGAV:ITGB6 or ITGAV:ITGB8): integrin-binding to LAP stabilizes an alternative conformation of the LAP bowtie tail and results in distortion of the LAP chain and subsequent release of the active TGF-beta-1. Once activated following release of LAP, TGF-beta-1 acts by binding to TGF-beta receptors (TGFBR1 and TGFBR2), which transduce signal. While expressed by many cells types, TGF-beta-1 only has a very localized range of action within cell environment thanks to fine regulation of its activation by Latency-associated peptide chain (LAP) and 'milieu molecules'. Plays an important role in bone remodeling: acts as a potent stimulator of osteoblastic bone formation, causing chemotaxis, proliferation and differentiation in committed osteoblasts. Can promote either T-helper 17 cells (Th17) or regulatory T-cells (Treg) lineage differentiation in a concentration-dependent manner. At high concentrations, leads to FOXP3-mediated suppression of RORC and down-regulation of IL-17 expression, favoring Treg cell development. At low concentrations in concert with IL-6 and IL-21, leads to expression of the IL-17 and IL-23 receptors, favoring differentiation to Th17 cells. Stimulates sustained production of collagen through the activation of CREB3L1 by regulated intramembrane proteolysis (RIP). Mediates SMAD2/3 activation by inducing its phosphorylation and subsequent translocation to the nucleus. Positively regulates odontoblastic differentiation in dental papilla cells, via promotion of IPO7-mediated translocation of phosphorylated SMAD2 to the nucleus and subsequent transcription of target genes. Can induce epithelial-to-mesenchymal transition (EMT) and cell migration in various cell types. This Canis lupus familiaris (Dog) protein is Transforming growth factor beta-1 proprotein (TGFB1).